Consider the following 262-residue polypeptide: Adenosylcobinamide-GDP ribazoletransferase (262 aa).

5 consecutive transmembrane segments (helical) span residues 41 to 63, 68 to 85, 115 to 134, 141 to 163, and 201 to 221; these read AFPFAGLAIALPSAAVAMALMAL, LFAAFVVVAIQALVTGAL, IGTYAAVALILSFGLRVSAF, FSPLGAAMAILGAACLSRAAMVW, and LLFYLAQVPALGVIAALVAFL.

The protein belongs to the CobS family. In terms of assembly, associated with a large complex of proteins. Requires Mg(2+) as cofactor.

The protein localises to the cell inner membrane. The enzyme catalyses alpha-ribazole + adenosylcob(III)inamide-GDP = adenosylcob(III)alamin + GMP + H(+). It catalyses the reaction alpha-ribazole 5'-phosphate + adenosylcob(III)inamide-GDP = adenosylcob(III)alamin 5'-phosphate + GMP + H(+). It participates in cofactor biosynthesis; adenosylcobalamin biosynthesis; adenosylcobalamin from cob(II)yrinate a,c-diamide: step 7/7. Joins adenosylcobinamide-GDP and alpha-ribazole to generate adenosylcobalamin (Ado-cobalamin). Also synthesizes adenosylcobalamin 5'-phosphate from adenosylcobinamide-GDP and alpha-ribazole 5'-phosphate. The chain is Adenosylcobinamide-GDP ribazoletransferase (cobV) from Sinorhizobium sp.